The chain runs to 237 residues: Sugar fermentation stimulation protein homolog (237 aa).

The protein belongs to the SfsA family.

The polypeptide is Sugar fermentation stimulation protein homolog (Colwellia psychrerythraea (strain 34H / ATCC BAA-681) (Vibrio psychroerythus)).